We begin with the raw amino-acid sequence, 414 residues long: MTDTPGLLGTPLAWTPPARPAGPQMERAGNGSQGPGPLFLTSPLARGVSGVFVWAALVLTGHQIYLHLRSYTVPHEQRYIIRLLFIVPVYAFDSWLSLLLLGGHQHYIYFDSVRDCYEAFVIYSFLSLCFQYLGGESAIMAEIRGKPVRTSCFHGTCCLRGMTYSIGFLRFCKQATLQFCIVKPIMALVTIVLQAFGKYHDGDFNVRSGYLYITLVYNASVSLALYALFLFYSATRELLQPFEPVLKFLTIKAVIFLSFWQGLLLAILERCGVIPEVQVIDGSTVGAGTVAAGYQNFIICIEMLFASIALRYAFTCQVYSEKTESSPAPSAPMQSISSGLKETMSPQDIVQDAIHNFSPAYQKYTQQATQEAPRPGQGSVPSPRTPTHSPDGGPGGGRKGRNVEKRMLIPAEEL.

The segment at 1–32 (MTDTPGLLGTPLAWTPPARPAGPQMERAGNGS) is disordered. A run of 7 helical transmembrane segments spans residues 48–68 (VSGVFVWAALVLTGHQIYLHL), 83–103 (LLFIVPVYAFDSWLSLLLLGG), 120–140 (FVIYSFLSLCFQYLGGESAIM), 177–197 (LQFCIVKPIMALVTIVLQAFG), 211–231 (LYITLVYNASVSLALYALFLF), 248–268 (FLTIKAVIFLSFWQGLLLAIL), and 290–310 (VAAGYQNFIICIEMLFASIAL). Disordered stretches follow at residues 323–342 (TESSPAPSAPMQSISSGLKE) and 364–414 (YTQQ…AEEL). Polar residues predominate over residues 379 to 388 (SVPSPRTPTH).

Belongs to the TMEM184 family. Expressed in vascular cells (at protein level).

The protein localises to the cell membrane. The protein resides in the cytoplasm. It is found in the perinuclear region. Its subcellular location is the cytoplasmic vesicle membrane. It localises to the early endosome membrane. The protein localises to the endosome. The protein resides in the cytoplasmic vesicle. It is found in the secretory vesicle membrane. Acts as a heparin receptor in vascular cells. May be involved in vesicle transport in exocrine cells and Sertoli cells. The protein is Transmembrane protein 184A (TMEM184A) of Bos taurus (Bovine).